The sequence spans 380 residues: Cytochrome b (380 aa).

A run of 4 helical transmembrane segments spans residues 33–53 (FGSL…FLAM), 77–98 (WLIR…FLHV), 113–133 (WNMG…GYVL), and 178–198 (FFAF…VHLL). His-83 and His-97 together coordinate heme b. Heme b-binding residues include His-182 and His-196. His-201 is an a ubiquinone binding site. Transmembrane regions (helical) follow at residues 226–246 (IKDF…VLFF), 288–308 (LGGV…PLLH), 320–340 (ITQT…WIGG), and 347–367 (FIMI…IFMP).

It belongs to the cytochrome b family. In terms of assembly, the cytochrome bc1 complex contains 11 subunits: 3 respiratory subunits (MT-CYB, CYC1 and UQCRFS1), 2 core proteins (UQCRC1 and UQCRC2) and 6 low-molecular weight proteins (UQCRH/QCR6, UQCRB/QCR7, UQCRQ/QCR8, UQCR10/QCR9, UQCR11/QCR10 and a cleavage product of UQCRFS1). This cytochrome bc1 complex then forms a dimer. Heme b serves as cofactor.

It localises to the mitochondrion inner membrane. In terms of biological role, component of the ubiquinol-cytochrome c reductase complex (complex III or cytochrome b-c1 complex) that is part of the mitochondrial respiratory chain. The b-c1 complex mediates electron transfer from ubiquinol to cytochrome c. Contributes to the generation of a proton gradient across the mitochondrial membrane that is then used for ATP synthesis. This is Cytochrome b (MT-CYB) from Chionomys roberti (Robert's snow vole).